The primary structure comprises 287 residues: Ribosomal RNA small subunit methyltransferase A (287 aa).

The segment covering 1-15 (MSKTTFDAQSITNSL) has biased composition (polar residues). The segment at 1 to 20 (MSKTTFDAQSITNSLRAAKH) is disordered. S-adenosyl-L-methionine contacts are provided by Asn-29, Leu-31, Gly-56, Glu-77, and Asn-126.

Belongs to the class I-like SAM-binding methyltransferase superfamily. rRNA adenine N(6)-methyltransferase family. RsmA subfamily.

The protein resides in the cytoplasm. The enzyme catalyses adenosine(1518)/adenosine(1519) in 16S rRNA + 4 S-adenosyl-L-methionine = N(6)-dimethyladenosine(1518)/N(6)-dimethyladenosine(1519) in 16S rRNA + 4 S-adenosyl-L-homocysteine + 4 H(+). Specifically dimethylates two adjacent adenosines (A1518 and A1519) in the loop of a conserved hairpin near the 3'-end of 16S rRNA in the 30S particle. May play a critical role in biogenesis of 30S subunits. This chain is Ribosomal RNA small subunit methyltransferase A, found in Psychrobacter cryohalolentis (strain ATCC BAA-1226 / DSM 17306 / VKM B-2378 / K5).